A 193-amino-acid chain; its full sequence is Lipid A acyltransferase PagP (193 aa).

An N-terminal signal peptide occupies residues 1-32; that stretch reads MNGMAVVMIIRKYFLIIALLVMPWLAIPSVSA. Active-site residues include His-65, Asp-108, and Ser-109.

The protein belongs to the lipid A palmitoyltransferase family. Homodimer.

It is found in the cell outer membrane. The enzyme catalyses a lipid A + a 1,2-diacyl-sn-glycero-3-phosphocholine = a hepta-acyl lipid A + a 2-acyl-sn-glycero-3-phosphocholine. It carries out the reaction a lipid IVA + a 1,2-diacyl-sn-glycero-3-phosphocholine = a lipid IVB + a 2-acyl-sn-glycero-3-phosphocholine. The catalysed reaction is a lipid IIA + a 1,2-diacyl-sn-glycero-3-phosphocholine = a lipid IIB + a 2-acyl-sn-glycero-3-phosphocholine. In terms of biological role, transfers a fatty acid residue from the sn-1 position of a phospholipid to the N-linked hydroxyfatty acid chain on the proximal unit of lipid A or its precursors. The chain is Lipid A acyltransferase PagP from Salmonella paratyphi C (strain RKS4594).